The chain runs to 342 residues: Probable dual-specificity RNA methyltransferase RlmN (342 aa).

Glu91 (proton acceptor) is an active-site residue. The Radical SAM core domain maps to 97-327; that stretch reads YKHGNSICVS…TTIRREMGAD (231 aa). Cys104 and Cys332 form a disulfide bridge. Residues Cys111, Cys115, and Cys118 each contribute to the [4Fe-4S] cluster site. S-adenosyl-L-methionine contacts are provided by residues 158–159, Ser190, 213–215, and Asn289; these read GE and SLH. Residue Cys332 is the S-methylcysteine intermediate of the active site.

Belongs to the radical SAM superfamily. RlmN family. [4Fe-4S] cluster is required as a cofactor.

The protein resides in the cytoplasm. It catalyses the reaction adenosine(2503) in 23S rRNA + 2 reduced [2Fe-2S]-[ferredoxin] + 2 S-adenosyl-L-methionine = 2-methyladenosine(2503) in 23S rRNA + 5'-deoxyadenosine + L-methionine + 2 oxidized [2Fe-2S]-[ferredoxin] + S-adenosyl-L-homocysteine. The enzyme catalyses adenosine(37) in tRNA + 2 reduced [2Fe-2S]-[ferredoxin] + 2 S-adenosyl-L-methionine = 2-methyladenosine(37) in tRNA + 5'-deoxyadenosine + L-methionine + 2 oxidized [2Fe-2S]-[ferredoxin] + S-adenosyl-L-homocysteine. Specifically methylates position 2 of adenine 2503 in 23S rRNA and position 2 of adenine 37 in tRNAs. This is Probable dual-specificity RNA methyltransferase RlmN from Clostridium botulinum (strain ATCC 19397 / Type A).